The following is a 138-amino-acid chain: Nucleoside diphosphate kinase (138 aa).

ATP-binding residues include lysine 9, phenylalanine 57, arginine 85, threonine 91, arginine 102, and asparagine 112. The active-site Pros-phosphohistidine intermediate is histidine 115.

This sequence belongs to the NDK family. As to quaternary structure, homotetramer. Mg(2+) serves as cofactor.

It is found in the cytoplasm. The catalysed reaction is a 2'-deoxyribonucleoside 5'-diphosphate + ATP = a 2'-deoxyribonucleoside 5'-triphosphate + ADP. It catalyses the reaction a ribonucleoside 5'-diphosphate + ATP = a ribonucleoside 5'-triphosphate + ADP. Its function is as follows. Major role in the synthesis of nucleoside triphosphates other than ATP. The ATP gamma phosphate is transferred to the NDP beta phosphate via a ping-pong mechanism, using a phosphorylated active-site intermediate. In Desulforapulum autotrophicum (strain ATCC 43914 / DSM 3382 / VKM B-1955 / HRM2) (Desulfobacterium autotrophicum), this protein is Nucleoside diphosphate kinase.